A 1392-amino-acid polypeptide reads, in one-letter code: ATP-dependent helicase/nuclease subunit A (1392 aa).

Positions 3–489 (NPKWTPAQQA…IDLNQNFRSR (487 aa)) constitute a UvrD-like helicase ATP-binding domain. 24 to 31 (AAAGSGKT) is a binding site for ATP. Disordered stretches follow at residues 291–319 (RGSK…KARD), 555–594 (KRGA…LEEA), and 1051–1126 (GPVQ…LDTK). 2 stretches are compositionally biased toward basic and acidic residues: residues 305-319 (ENSK…KARD) and 567-583 (SPAK…REPE). Residues 556 to 886 (RGAEDAATEV…RFITVHSSKG (331 aa)) form the UvrD-like helicase C-terminal domain. Positions 584 to 594 (SGDDESSLEEA) are enriched in acidic residues. The segment covering 1088–1113 (ASGKTEIPGETKNSEETKTSEDKKNL) has biased composition (basic and acidic residues).

It belongs to the helicase family. AddA subfamily. In terms of assembly, heterodimer of AddA and AddB/RexB. Mg(2+) is required as a cofactor.

It catalyses the reaction Couples ATP hydrolysis with the unwinding of duplex DNA by translocating in the 3'-5' direction.. It carries out the reaction ATP + H2O = ADP + phosphate + H(+). In terms of biological role, the heterodimer acts as both an ATP-dependent DNA helicase and an ATP-dependent, dual-direction single-stranded exonuclease. Recognizes the chi site generating a DNA molecule suitable for the initiation of homologous recombination. The AddA nuclease domain is required for chi fragment generation; this subunit has the helicase and 3' -&gt; 5' nuclease activities. This is ATP-dependent helicase/nuclease subunit A from Desulfitobacterium hafniense (strain DSM 10664 / DCB-2).